Reading from the N-terminus, the 129-residue chain is Histone H2B.2 (129 aa).

Residues 1-19 show a composition bias toward basic and acidic residues; it reads MAPKAEKKPASKAPAEKKP. A disordered region spans residues 1 to 37; it reads MAPKAEKKPASKAPAEKKPAAKKTASSDSKKRTKTRK. Residues Lys7 and Lys8 each carry the N6-acetyllysine; alternate modification. Glycyl lysine isopeptide (Lys-Gly) (interchain with G-Cter in SUMO); alternate cross-links involve residues Lys7 and Lys8. Residue Ser11 is modified to Phosphoserine. Position 12 is an N6-acetyllysine (Lys12). Lys17 carries the N6-acetyllysine; alternate modification. A Glycyl lysine isopeptide (Lys-Gly) (interchain with G-Cter in SUMO); alternate cross-link involves residue Lys17. Lys18 is covalently cross-linked (Glycyl lysine isopeptide (Lys-Gly) (interchain with G-Cter in SUMO)). Lys123 participates in a covalent cross-link: Glycyl lysine isopeptide (Lys-Gly) (interchain with G-Cter in ubiquitin).

Belongs to the histone H2B family. As to quaternary structure, the nucleosome is a histone octamer containing two molecules each of H2A, H2B, H3 and H4 assembled in one H3-H4 heterotetramer and two H2A-H2B heterodimers. The octamer wraps approximately 147 bp of DNA. Monoubiquitinated by the UBC2-BRE1 complex to form H2BK123ub1. H2BK123ub1 gives a specific tag for epigenetic transcriptional activation and is also prerequisite for H3K4me and H3K79me formation. H2BK123ub1 also modulates the formation of double-strand breaks during meiosis and is a prerequisite for DNA-damage checkpoint activation. Post-translationally, phosphorylated by STE20 to form H2BS10ph during progression through meiotic prophase. May be correlated with chromosome condensation. In terms of processing, acetylated by GCN5 to form H2BK11ac and H2BK16ac. H2BK16ac can also be formed by ESA1. Acetylation of N-terminal lysines and particularly formation of H2BK11acK16ac has a positive effect on transcription. Sumoylation to form H2BK6su or H2BK7su, and probably also H2BK16su or H2BK17su, occurs preferentially near the telomeres and represses gene transcription.

It localises to the nucleus. The protein localises to the chromosome. In terms of biological role, core component of nucleosome. Nucleosomes wrap and compact DNA into chromatin, limiting DNA accessibility to the cellular machineries which require DNA as a template. Histones thereby play a central role in transcription regulation, DNA repair, DNA replication and chromosomal stability. DNA accessibility is regulated via a complex set of post-translational modifications of histones, also called histone code, and nucleosome remodeling. In Meyerozyma guilliermondii (strain ATCC 6260 / CBS 566 / DSM 6381 / JCM 1539 / NBRC 10279 / NRRL Y-324) (Yeast), this protein is Histone H2B.2 (HTB2).